A 120-amino-acid chain; its full sequence is Large ribosomal subunit protein uL18 (120 aa).

The protein belongs to the universal ribosomal protein uL18 family. As to quaternary structure, part of the 50S ribosomal subunit; part of the 5S rRNA/L5/L18/L25 subcomplex. Contacts the 5S and 23S rRNAs.

Its function is as follows. This is one of the proteins that bind and probably mediate the attachment of the 5S RNA into the large ribosomal subunit, where it forms part of the central protuberance. The chain is Large ribosomal subunit protein uL18 from Rhodopseudomonas palustris (strain HaA2).